The following is a 325-amino-acid chain: GMP reductase (325 aa).

C173 acts as the Thioimidate intermediate in catalysis. 202 to 225 (IIADGGIRHHGDIAKSVRFGAAMV) contacts NADP(+).

It belongs to the IMPDH/GMPR family. GuaC type 2 subfamily.

The enzyme catalyses IMP + NH4(+) + NADP(+) = GMP + NADPH + 2 H(+). Its function is as follows. Catalyzes the irreversible NADPH-dependent deamination of GMP to IMP. It functions in the conversion of nucleobase, nucleoside and nucleotide derivatives of G to A nucleotides, and in maintaining the intracellular balance of A and G nucleotides. The chain is GMP reductase from Leptothrix cholodnii (strain ATCC 51168 / LMG 8142 / SP-6) (Leptothrix discophora (strain SP-6)).